A 305-amino-acid polypeptide reads, in one-letter code: tRNA dimethylallyltransferase (305 aa).

Residue 8–15 (GPTAVGKT) participates in ATP binding. Residue 10–15 (TAVGKT) participates in substrate binding. An interaction with substrate tRNA region spans residues 33–36 (DSRQ).

It belongs to the IPP transferase family. In terms of assembly, monomer. Mg(2+) is required as a cofactor.

It catalyses the reaction adenosine(37) in tRNA + dimethylallyl diphosphate = N(6)-dimethylallyladenosine(37) in tRNA + diphosphate. Catalyzes the transfer of a dimethylallyl group onto the adenine at position 37 in tRNAs that read codons beginning with uridine, leading to the formation of N6-(dimethylallyl)adenosine (i(6)A). The polypeptide is tRNA dimethylallyltransferase (Thermotoga sp. (strain RQ2)).